Consider the following 397-residue polypeptide: 2-aminoadipate transaminase (397 aa).

Gly40 contacts substrate. Pyridoxal 5'-phosphate is bound by residues Tyr70, Ser100–Gln101, Asn174, Asp202–Tyr205, Ser235–Ser237, and Arg245. Asn174 contacts substrate. At Lys263 the chain carries N6-(pyridoxal phosphate)lysine. Arg368 contacts substrate.

The protein belongs to the class-I pyridoxal-phosphate-dependent aminotransferase family. In terms of assembly, homodimer. Requires pyridoxal 5'-phosphate as cofactor.

The enzyme catalyses L-2-aminoadipate + 2-oxoglutarate = 2-oxoadipate + L-glutamate. It functions in the pathway amino-acid biosynthesis; L-lysine biosynthesis via AAA pathway; L-alpha-aminoadipate from 2-oxoglutarate: step 5/5. Functionally, catalyzes the transfer of an amino group between 2-oxoadipate (2-OA) and glutamate (Glu) to yield alpha-aminodipate (AAA). It can also transaminate glutamate, leucine, and aromatic amino acids. It also contributes in the biosynthesis of other amino acids such as leucine. The protein is 2-aminoadipate transaminase (lysN) of Thermus thermophilus (strain ATCC BAA-163 / DSM 7039 / HB27).